Here is a 101-residue protein sequence, read N- to C-terminus: Aspartyl/glutamyl-tRNA(Asn/Gln) amidotransferase subunit C (101 aa).

It belongs to the GatC family. As to quaternary structure, heterotrimer of A, B and C subunits.

It catalyses the reaction L-glutamyl-tRNA(Gln) + L-glutamine + ATP + H2O = L-glutaminyl-tRNA(Gln) + L-glutamate + ADP + phosphate + H(+). It carries out the reaction L-aspartyl-tRNA(Asn) + L-glutamine + ATP + H2O = L-asparaginyl-tRNA(Asn) + L-glutamate + ADP + phosphate + 2 H(+). Allows the formation of correctly charged Asn-tRNA(Asn) or Gln-tRNA(Gln) through the transamidation of misacylated Asp-tRNA(Asn) or Glu-tRNA(Gln) in organisms which lack either or both of asparaginyl-tRNA or glutaminyl-tRNA synthetases. The reaction takes place in the presence of glutamine and ATP through an activated phospho-Asp-tRNA(Asn) or phospho-Glu-tRNA(Gln). This chain is Aspartyl/glutamyl-tRNA(Asn/Gln) amidotransferase subunit C, found in Lactobacillus delbrueckii subsp. bulgaricus (strain ATCC 11842 / DSM 20081 / BCRC 10696 / JCM 1002 / NBRC 13953 / NCIMB 11778 / NCTC 12712 / WDCM 00102 / Lb 14).